The sequence spans 443 residues: Alpha-amylase (443 aa).

The N-terminal stretch at 1–24 (MHNTLFRTALLAAALGSFSHTASA) is a signal peptide. Substrate-binding residues include His-114 and Arg-196. Asp-198 serves as the catalytic Nucleophile. 201 to 202 (KH) contacts substrate. Glu-223 (proton donor) is an active-site residue. Substrate is bound by residues Gly-228 and His-287.

It belongs to the glycosyl hydrolase 13 family.

It localises to the secreted. The catalysed reaction is Endohydrolysis of (1-&gt;4)-alpha-D-glucosidic linkages in polysaccharides containing three or more (1-&gt;4)-alpha-linked D-glucose units.. In Aeromonas hydrophila, this protein is Alpha-amylase (amyA).